Consider the following 274-residue polypeptide: Dehydration-responsive element-binding protein 2A (274 aa).

Composition is skewed to basic and acidic residues over residues 1-10 and 35-50; these read MERGEGRRGD and KWWKEQNQKLQEENSS. Residues 1–75 form a disordered region; it reads MERGEGRRGD…KGGPENSNCA (75 aa). Residues 75 to 132 constitute a DNA-binding region (AP2/ERF); it reads AYRGVRQRTWGKWVAEIREPNRGRRLWLGSFPTALEAAHAYDEAARAMYGPTARVNFA.

Belongs to the AP2/ERF transcription factor family. ERF subfamily.

Its subcellular location is the nucleus. In terms of biological role, transcriptional activator that binds specifically to the DNA sequence 5'-[AG]CCGAC-3' of the cis-acting dehydration-responsive element (DRE). Binding to the C-repeat/DRE element mediates high salinity- and dehydration-inducible transcription. This Oryza sativa subsp. japonica (Rice) protein is Dehydration-responsive element-binding protein 2A (DREB2A).